The sequence spans 2285 residues: Protein Ycf2 (2285 aa).

1638 to 1645 serves as a coordination point for ATP; that stretch reads GSIGTGRS.

This sequence belongs to the Ycf2 family.

Its subcellular location is the plastid. It localises to the chloroplast stroma. Probable ATPase of unknown function. Its presence in a non-photosynthetic plant (Epifagus virginiana) and experiments in tobacco indicate that it has an essential function which is probably not related to photosynthesis. This Populus trichocarpa (Western balsam poplar) protein is Protein Ycf2.